Here is a 76-residue protein sequence, read N- to C-terminus: U-scoloptoxin(15)-Ssd3b (76 aa).

The first 23 residues, 1–23, serve as a signal peptide directing secretion; the sequence is MEKKIIFLCFLVALLTFPEFISS.

Contains 2 disulfide bonds. As to expression, expressed by the venom gland.

The protein localises to the secreted. This Scolopendra dehaani (Thai centipede) protein is U-scoloptoxin(15)-Ssd3b.